Here is a 278-residue protein sequence, read N- to C-terminus: Ribosomal protein L11 methyltransferase (278 aa).

4 residues coordinate S-adenosyl-L-methionine: Thr-131, Gly-152, Asp-173, and Asn-214.

The protein belongs to the methyltransferase superfamily. PrmA family.

It is found in the cytoplasm. The catalysed reaction is L-lysyl-[protein] + 3 S-adenosyl-L-methionine = N(6),N(6),N(6)-trimethyl-L-lysyl-[protein] + 3 S-adenosyl-L-homocysteine + 3 H(+). Functionally, methylates ribosomal protein L11. The sequence is that of Ribosomal protein L11 methyltransferase from Campylobacter lari (strain RM2100 / D67 / ATCC BAA-1060).